The sequence spans 168 residues: Photosystem I assembly protein Ycf3 (168 aa).

TPR repeat units follow at residues 35-68 (AFTY…EIDP), 72-105 (SYIL…NPFL), and 120-153 (GEQA…TPGN).

The protein belongs to the Ycf3 family.

The protein resides in the plastid. It localises to the chloroplast thylakoid membrane. Its function is as follows. Essential for the assembly of the photosystem I (PSI) complex. May act as a chaperone-like factor to guide the assembly of the PSI subunits. This Helianthus annuus (Common sunflower) protein is Photosystem I assembly protein Ycf3.